The primary structure comprises 218 residues: Transmembrane gamma-carboxyglutamic acid protein 1 (218 aa).

A propeptide spanning residues 1 to 20 (MGRVFLTGEKANSILKRYPR) is cleaved from the precursor. A Gla domain is found at 21-66 (ANGFFEEIRQGNIERECKEEFCTFEEAREAFENNEKTKEFWSTYTK). At 21–83 (ANGFFEEIRQ…RGSDWFQFYL (63 aa)) the chain is on the extracellular side. C37 and C42 are disulfide-bonded. The helical transmembrane segment at 84-106 (TFPLIFGLFIILLVIFLIWRCFL) threads the bilayer. At 107–218 (RNKTRRQTVT…PMVPVVTTIK (112 aa)) the chain is on the cytoplasmic side. Residues 161 to 195 (TRLSNCDPPPTYEEATGQVNLQRSETEPHLDPPPE) form a disordered region.

Post-translationally, gla residues are produced after subsequent post-translational modifications of glutamate by a vitamin K-dependent gamma-carboxylase. Highly expressed in the spinal cord.

The protein resides in the membrane. The sequence is that of Transmembrane gamma-carboxyglutamic acid protein 1 (PRRG1) from Homo sapiens (Human).